A 310-amino-acid chain; its full sequence is Methionyl-tRNA formyltransferase (310 aa).

A (6S)-5,6,7,8-tetrahydrofolate-binding site is contributed by 114 to 117 (SLLP).

The protein belongs to the Fmt family.

It catalyses the reaction L-methionyl-tRNA(fMet) + (6R)-10-formyltetrahydrofolate = N-formyl-L-methionyl-tRNA(fMet) + (6S)-5,6,7,8-tetrahydrofolate + H(+). Its function is as follows. Attaches a formyl group to the free amino group of methionyl-tRNA(fMet). The formyl group appears to play a dual role in the initiator identity of N-formylmethionyl-tRNA by promoting its recognition by IF2 and preventing the misappropriation of this tRNA by the elongation apparatus. The sequence is that of Methionyl-tRNA formyltransferase from Granulibacter bethesdensis (strain ATCC BAA-1260 / CGDNIH1).